A 592-amino-acid polypeptide reads, in one-letter code: Outer spore wall assembly protein SHE10 (592 aa).

The N-terminal stretch at 1 to 23 is a signal peptide; sequence MRFFKRFLLTLTVFIYTLRYLHC. Coiled-coil stretches lie at residues 354-385 and 448-583; these read ENNISTNLTNTIDELDKNIQEIHEHHVELYEE and LNQF…KQMG. The segment covering 507-580 has biased composition (basic and acidic residues); the sequence is QSEQEERIKS…EVRKQEEARK (74 aa). The tract at residues 507–592 is disordered; it reads QSEQEERIKS…GSPPPPQQQQ (86 aa).

The protein belongs to the SHE10 family. As to quaternary structure, component of the mitochondria-localized RNase mitochondrial RNA-processing (RNase MRP) composed of one single RNA encoded by the NME1 gene and at least 31 proteins. Absent in the nucleus-localized RNase MRP (NuMRP).

The protein localises to the mitochondrion. Involved in spore wall assembly. May be a component of the mitochondrial RNase MRP (MtMRP), a ribonucleoprotein endoribonuclease involved in the cleaving RNA transcripts to generate primers for DNA replication in mitochondria. This is Outer spore wall assembly protein SHE10 from Vanderwaltozyma polyspora (strain ATCC 22028 / DSM 70294 / BCRC 21397 / CBS 2163 / NBRC 10782 / NRRL Y-8283 / UCD 57-17) (Kluyveromyces polysporus).